A 28-amino-acid polypeptide reads, in one-letter code: Short cationic peptide-1a (28 aa).

Glu-28 carries the post-translational modification Glutamic acid 1-amide.

In terms of tissue distribution, expressed by the venom gland.

It localises to the secreted. The protein is Short cationic peptide-1a of Cupiennius salei (American wandering spider).